A 156-amino-acid chain; its full sequence is Ribonuclease H (156 aa).

The RNase H type-1 domain occupies 7–148; the sequence is QDKIVMIATD…ADQLASDAAI (142 aa). Mg(2+) is bound by residues D16, E54, D76, and D140.

Belongs to the RNase H family. As to quaternary structure, monomer. It depends on Mg(2+) as a cofactor.

The protein resides in the cytoplasm. The enzyme catalyses Endonucleolytic cleavage to 5'-phosphomonoester.. Endonuclease that specifically degrades the RNA of RNA-DNA hybrids. The sequence is that of Ribonuclease H (rnhA) from Zymomonas mobilis subsp. mobilis (strain ATCC 31821 / ZM4 / CP4).